Reading from the N-terminus, the 344-residue chain is AP2/ERF and B3 domain-containing transcription factor RAV1 (344 aa).

Over residues Met-1–Ser-15 the composition is skewed to low complexity. A disordered region spans residues Met-1 to Ile-22. The segment at residues Lys-61 to Lys-116 is a DNA-binding region (AP2/ERF). Residues Glu-148 to Ser-169 are disordered. The TF-B3 DNA-binding region spans Phe-188–Ser-292.

The protein belongs to the AP2/ERF transcription factor family. RAV subfamily. In terms of assembly, monomer. As to expression, expressed in all tissues examined: Roots, rosette leaves, cauline leaves, inflorescence stems, flowers and siliques. Highest expression in roots and rosette leaves. Very low expression in flowers.

It localises to the nucleus. In terms of biological role, binds specifically to bipartite recognition sequences composed of two unrelated motifs, 5'-CAACA-3' and 5'-CACCTG-3'. May function as negative regulator of plant growth and development. The protein is AP2/ERF and B3 domain-containing transcription factor RAV1 (RAV1) of Arabidopsis thaliana (Mouse-ear cress).